The following is a 198-amino-acid chain: Probable molybdenum cofactor guanylyltransferase (198 aa).

GTP contacts are provided by residues 9-11 (LAG), Lys22, Asp66, and Asp95. Asp95 lines the Mg(2+) pocket.

It belongs to the MobA family. It depends on Mg(2+) as a cofactor.

The protein localises to the cytoplasm. The catalysed reaction is Mo-molybdopterin + GTP + H(+) = Mo-molybdopterin guanine dinucleotide + diphosphate. Its function is as follows. Transfers a GMP moiety from GTP to Mo-molybdopterin (Mo-MPT) cofactor (Moco or molybdenum cofactor) to form Mo-molybdopterin guanine dinucleotide (Mo-MGD) cofactor. The chain is Probable molybdenum cofactor guanylyltransferase from Clostridium perfringens (strain SM101 / Type A).